A 51-amino-acid polypeptide reads, in one-letter code: Small ribosomal subunit protein eS31 (51 aa).

Zn(2+) contacts are provided by Cys-22, Cys-25, Cys-40, and Cys-43. A C4-type zinc finger spans residues Cys-22–Cys-43.

It belongs to the eukaryotic ribosomal protein eS31 family. As to quaternary structure, part of the 30S ribosomal subunit. Zn(2+) serves as cofactor.

In Methanosphaera stadtmanae (strain ATCC 43021 / DSM 3091 / JCM 11832 / MCB-3), this protein is Small ribosomal subunit protein eS31.